A 421-amino-acid polypeptide reads, in one-letter code: Prenyltransferase asqH2 (421 aa).

A disordered region spans residues Met-1–Lys-28. Glu-105 contributes to the L-tryptophan binding site. Substrate is bound by residues Arg-119, Arg-272, Lys-274, Tyr-276, and Tyr-341.

The protein belongs to the tryptophan dimethylallyltransferase family.

It catalyses the reaction yaequinolone E + dimethylallyl diphosphate + H2O = [(1'E)-3'-hydroxy-3',7'-dimethylocta-1',6'-dien-1'-yl]-quinolinone B + diphosphate. The protein operates within secondary metabolite biosynthesis. It functions in the pathway alkaloid biosynthesis. Its pathway is mycotoxin biosynthesis. Its function is as follows. Prenyltransferase; part of the gene cluster that mediates the biosynthesis of the aspoquinolone mycotoxins. Within the pathway, the prenyltransferase asqH2 performs the second alkylation with DMAPP at delta(3') double bond to yield a carbenium ion intermediate, which can be attacked by H(2)O to yield a styrenyl quinolone containing a C3'-hydroxyprenyl chain. The first step of the pathway is catalyzed by the nonribosomal peptide synthetase asqK that condenses anthranilic acid and O-methyl-L-tyrosine to produce 4'-methoxycyclopeptin. 4'-methoxycyclopeptin is then converted to 4'-methoxydehydrocyclopeptin by the ketoglutarate-dependent dioxygenase asqJ. AsqJ also converts its first product 4'-methoxydehydrocyclopeptin to 4'-methoxycyclopenin. The following conversion of 4'-methoxycyclopenin into 4'-methoxyviridicatin is catalyzed by the cyclopenase asqI. 4'-methoxyviridicatin is the precursor of quinolone natural products, and is further converted to quinolinone B. The prenyltransferase asqH1 then catalyzes the canonical Friedel-Crafts alkylation of quinolinone B with dimethylallyl cation to yield dimethylallyl quinolone, which is subjected to FAD-dependent dehydrogenation by the FAD-linked oxidoreductase asqF to yield conjugated aryl diene. The delta(3') double bond then serves as the site of the second alkylation with DMAPP catalyzed by the prenyltransferase asqH2 to yield a carbenium ion intermediate, which can be attacked by H(2)O to yield a styrenyl quinolone containing a C3'-hydroxyprenyl chain. The FAD-dependent monooxygenase asqG performs epoxidation of the terminal C7'-C8' olefin. Finally, after dehydratation of the epoxide at C3 by asqC, the quinolone epoxide rearrangement protein asqO catalyzes an enzymatic 3-exo-tet cyclization to yield the cyclopropyl-THF ring system in aspoquinolone. The sequence is that of Prenyltransferase asqH2 from Emericella nidulans (strain FGSC A4 / ATCC 38163 / CBS 112.46 / NRRL 194 / M139) (Aspergillus nidulans).